The chain runs to 326 residues: Putative GTPase CC_2483 (326 aa).

GTP-binding positions include 61–69 (GVPGAGKST), Asp203, and 238–240 (SGL).

The protein belongs to the SIMIBI class G3E GTPase family. ArgK/MeaB subfamily.

May have GTPase activity. May also bind and hydrolyze ATP. May function as chaperone. In Caulobacter vibrioides (strain ATCC 19089 / CIP 103742 / CB 15) (Caulobacter crescentus), this protein is Putative GTPase CC_2483.